A 198-amino-acid polypeptide reads, in one-letter code: MICOS complex subunit Mic26 (198 aa).

A signal peptide spans 1-23 (MFKVIQRSVGPASLSLLTFRVYA). N-linked (GlcNAc...) asparagine glycosylation is present at Asn-63. A helical transmembrane segment spans residues 108 to 128 (PGFFPRLGVIGFAGFVGLLFA).

Belongs to the apolipoprotein O/MICOS complex subunit Mic27 family. Component of the mitochondrial contact site and cristae organizing system (MICOS) complex, composed of at least MICOS10/MIC10, CHCHD3/MIC19, CHCHD6/MIC25, APOOL/MIC27, IMMT/MIC60, APOO/MIC23/MIC26 and MICOS13/MIC13. This complex was also known under the names MINOS or MitOS complex. The MICOS complex associates with mitochondrial outer membrane proteins SAMM50, MTX1 and MTX2 (together described as components of the mitochondrial outer membrane sorting assembly machinery (SAM) complex) and DNAJC11, mitochondrial inner membrane protein TMEM11 and with HSPA9. The MICOS and SAM complexes together with DNAJC11 are part of a large protein complex spanning both membranes termed the mitochondrial intermembrane space bridging (MIB) complex. Interacts with IMMT/MIC60. Interacts with MICOS10/MIC10 and APOOL/MIC27.

It is found in the mitochondrion inner membrane. It localises to the mitochondrion. The protein localises to the endoplasmic reticulum membrane. Its subcellular location is the golgi apparatus membrane. Its function is as follows. Component of the MICOS complex, a large protein complex of the mitochondrial inner membrane that plays crucial roles in the maintenance of crista junctions, inner membrane architecture, and formation of contact sites to the outer membrane. Plays a crucial role in crista junction formation and mitochondrial function. Can induce cardiac lipotoxicity by enhancing mitochondrial respiration and fatty acid metabolism in cardiac myoblasts. Promotes cholesterol efflux from macrophage cells. Detected in HDL, LDL and VLDL. Secreted by a microsomal triglyceride transfer protein (MTTP)-dependent mechanism, probably as a VLDL-associated protein that is subsequently transferred to HDL. This Mus musculus (Mouse) protein is MICOS complex subunit Mic26 (Apoo).